The primary structure comprises 158 residues: Protein EOLA2 (158 aa).

Residues 6–92 enclose the ASCH domain; the sequence is LSFRQPYAGF…IAGLVDIGET (87 aa).

This sequence belongs to the EOLA family.

In Homo sapiens (Human), this protein is Protein EOLA2.